The primary structure comprises 235 residues: Small ribosomal subunit protein uS2 (235 aa).

It belongs to the universal ribosomal protein uS2 family.

This Thermoanaerobacter pseudethanolicus (strain ATCC 33223 / 39E) (Clostridium thermohydrosulfuricum) protein is Small ribosomal subunit protein uS2.